A 257-amino-acid polypeptide reads, in one-letter code: MLLVIDVGNTNTVMGVFDDQRVVCDWRIRTERETTEDEFFVLASQLFAGKDIKPEIITATIVSCVVPPMRKILHAFCKKYLGHEPIWVSAEMDMGMPILYDNPAEVGADRIVNAVAAYERYHDALIVIDFGTATTFDCISKDGEYLGGAISPGVGIASEALFARASKLPRVEIFNPPAQAIGKDTAKSMQSGIILGYAGLVDGLVRRIVKEMENKPRVIATGGLAPLMANVAETIEEVESGLTLEGLRIIFDRVSNS.

6–13 (DVGNTNTV) is an ATP binding site. Residues Tyr100 and 107–110 (GADR) each bind substrate. Asp109 acts as the Proton acceptor in catalysis. Asp129 serves as a coordination point for K(+). Thr132 is a binding site for ATP. Thr185 is a binding site for substrate.

Belongs to the type III pantothenate kinase family. As to quaternary structure, homodimer. The cofactor is NH4(+). Requires K(+) as cofactor.

The protein localises to the cytoplasm. It carries out the reaction (R)-pantothenate + ATP = (R)-4'-phosphopantothenate + ADP + H(+). The protein operates within cofactor biosynthesis; coenzyme A biosynthesis; CoA from (R)-pantothenate: step 1/5. In terms of biological role, catalyzes the phosphorylation of pantothenate (Pan), the first step in CoA biosynthesis. The sequence is that of Type III pantothenate kinase from Desulfatibacillum aliphaticivorans.